Consider the following 128-residue polypeptide: uncharacterized protein (128 aa).

The next 2 helical transmembrane spans lie at 52-72 (LLVI…GIFL) and 91-111 (LFVA…VMLI).

The protein resides in the cell membrane. This is an uncharacterized protein from Mycoplasma pneumoniae (strain ATCC 29342 / M129 / Subtype 1) (Mycoplasmoides pneumoniae).